The following is a 643-amino-acid chain: Rhophilin-1 (643 aa).

The disordered stretch occupies residues 1 to 43 (MILEERPDGQGTGEESSRPQDDGSIRKGYGSFVQNQPGQLQSH). Positions 15-25 (ESSRPQDDGSI) are enriched in basic and acidic residues. The region spanning 30 to 104 (GSFVQNQPGQ…LAELSTSVDV (75 aa)) is the REM-1 domain. Position 31 is a phosphoserine (Ser-31). Positions 32–42 (FVQNQPGQLQS) are enriched in polar residues. The BRO1 domain occupies 115–462 (PMIPLGLKET…LAKYSQLERE (348 aa)). The PDZ domain occupies 500-577 (PVHMTRGEGS…EGVSLQVVSL (78 aa)).

Belongs to the RHPN family. As to quaternary structure, binds specifically to GTP-Rho. Interacts with ROPN1. In terms of tissue distribution, highly expressed in testis.

Functionally, has no enzymatic activity. May serve as a target for Rho, and interact with some cytoskeletal component upon Rho binding or relay a Rho signal to other molecules. In Mus musculus (Mouse), this protein is Rhophilin-1 (Rhpn1).